We begin with the raw amino-acid sequence, 377 residues long: Ribosomal RNA large subunit methyltransferase G (377 aa).

It belongs to the methyltransferase superfamily. RlmG family.

Its subcellular location is the cytoplasm. It carries out the reaction guanosine(1835) in 23S rRNA + S-adenosyl-L-methionine = N(2)-methylguanosine(1835) in 23S rRNA + S-adenosyl-L-homocysteine + H(+). Specifically methylates the guanine in position 1835 (m2G1835) of 23S rRNA. The protein is Ribosomal RNA large subunit methyltransferase G of Shewanella oneidensis (strain ATCC 700550 / JCM 31522 / CIP 106686 / LMG 19005 / NCIMB 14063 / MR-1).